The sequence spans 137 residues: Basic phospholipase A2 PeBP(R)-I/II (137 aa).

Residues Met-1–Gly-16 form the signal peptide. 7 disulfides stabilise this stretch: Cys-42-Cys-131, Cys-44-Cys-60, Cys-59-Cys-111, Cys-65-Cys-137, Cys-66-Cys-104, Cys-73-Cys-97, and Cys-91-Cys-102. The active site involves His-63. The active site involves Asp-105.

It belongs to the phospholipase A2 family. Group II subfamily. R49 sub-subfamily. Expressed by the venom gland.

Its subcellular location is the secreted. The catalysed reaction is a 1,2-diacyl-sn-glycero-3-phosphocholine + H2O = a 1-acyl-sn-glycero-3-phosphocholine + a fatty acid + H(+). Functionally, snake venom phospholipases A2 that have myotoxic, and edema-inducing activity, as well as extremely weak lipolytic activity. PLA2 catalyzes the calcium-dependent hydrolysis of the 2-acyl groups in 3-sn-phosphoglycerides. In Protobothrops elegans (Elegant pitviper), this protein is Basic phospholipase A2 PeBP(R)-I/II.